The chain runs to 584 residues: Aspartate--tRNA(Asp/Asn) ligase (584 aa).

E177 lines the L-aspartate pocket. Residues 201 to 204 (QLFK) are aspartate. R223 is an L-aspartate binding site. ATP is bound by residues 223–225 (RDE) and Q232. H447 provides a ligand contact to L-aspartate. E481 is a binding site for ATP. R488 is an L-aspartate binding site. ATP is bound at residue 533–536 (GLDR).

The protein belongs to the class-II aminoacyl-tRNA synthetase family. Type 1 subfamily. In terms of assembly, homodimer.

The protein resides in the cytoplasm. It carries out the reaction tRNA(Asx) + L-aspartate + ATP = L-aspartyl-tRNA(Asx) + AMP + diphosphate. In terms of biological role, aspartyl-tRNA synthetase with relaxed tRNA specificity since it is able to aspartylate not only its cognate tRNA(Asp) but also tRNA(Asn). Reaction proceeds in two steps: L-aspartate is first activated by ATP to form Asp-AMP and then transferred to the acceptor end of tRNA(Asp/Asn). The polypeptide is Aspartate--tRNA(Asp/Asn) ligase (Chlamydia caviae (strain ATCC VR-813 / DSM 19441 / 03DC25 / GPIC) (Chlamydophila caviae)).